The primary structure comprises 107 residues: Metallothionein-1 (107 aa).

The propeptide occupies 1–2 (MD).

This sequence belongs to the metallothionein superfamily. Type 7 family.

The metallothioneins are involved in the cellular sequestration of toxic metal ions. Binds 12 cadmium ions per molecule. This Tetrahymena pigmentosa protein is Metallothionein-1.